The sequence spans 91 residues: Cell division protein CrgA (91 aa).

Polar residues predominate over residues 1 to 24; sequence MPKSKITTEGSALPQSSSSATNRT. The disordered stretch occupies residues 1 to 28; that stretch reads MPKSKITTEGSALPQSSSSATNRTPVKI. Helical transmembrane passes span 38–58 and 68–88; these read IAIM…NYLA and LGPW…LMTM.

The protein belongs to the CrgA family.

It localises to the cell membrane. In terms of biological role, involved in cell division. In Corynebacterium aurimucosum (strain ATCC 700975 / DSM 44827 / CIP 107346 / CN-1) (Corynebacterium nigricans), this protein is Cell division protein CrgA.